The following is a 497-amino-acid chain: Virion host shutoff protein (497 aa).

2 disordered regions span residues 122 to 142 and 280 to 373; these read EHDT…PPQD and SVIS…SAEA. Basic and acidic residues predominate over residues 309–326; that stretch reads PNERRVISWRRQDDHDYD. The segment covering 327-344 has biased composition (acidic residues); sequence SSTEDSDQSDSSEEEEEC.

The protein belongs to the herpesviridae VHS protein family.

It is found in the virion. Minor structural protein that acts as an endoribonuclease during lytic infection. Degrades host mRNAs in the cytoplasm by cutting them at preferred sites, including some in regions of translation initiation. This Equine herpesvirus 1 (strain Ab4p) (EHV-1) protein is Virion host shutoff protein.